We begin with the raw amino-acid sequence, 124 residues long: Protein MGF 110-4L (124 aa).

A signal peptide spans M1 to G18. N64 is a glycosylation site (N-linked (GlcNAc...) asparagine; by host). Residues K121 to L124 carry the Prevents secretion from ER motif.

It belongs to the asfivirus MGF 110 family.

Its subcellular location is the virion. It localises to the host endoplasmic reticulum-Golgi intermediate compartment. Its function is as follows. Causes the redistribution of lumenal ER protein to an enlarged ERGIC compartment. The polypeptide is Protein MGF 110-4L (Ornithodoros (relapsing fever ticks)).